The sequence spans 734 residues: Photosystem I P700 chlorophyll a apoprotein A2 (734 aa).

8 helical membrane passes run 46–69 (IFASHFGQLAIIFLWTSGNLFHVA), 135–158 (LYIGALFLLITASMTLFAGWLHLQ), 175–199 (LNHHLSGLFGVSSLAWTGHLIHVAI), 273–291 (IAHHHLAIAVLFIVAGHMY), 330–353 (LHFQLGLALASLGVITSVVAQHMY), 369–395 (AALYTHHQYIAGFIMTGAFAHGAIFFI), 417–439 (AIISHLSWASLFLGFHTLGLYVH), and 517–535 (FLVHHAIALGLHTTTLILV). Residues Cys559 and Cys568 each contribute to the [4Fe-4S] cluster site. 2 helical membrane-spanning segments follow: residues 575 to 596 (AFYLAVFWMLNTIGWVTFYWHW) and 643 to 665 (LSVWAWMFLFGHLIWATGFMFLI). Chlorophyll a is bound by residues His654, Met662, and Tyr670. Trp671 contacts phylloquinone. A helical transmembrane segment spans residues 707-727 (VVGLAHFSVGYVFTYAAFLIA).

Belongs to the PsaA/PsaB family. As to quaternary structure, the PsaA/B heterodimer binds the P700 chlorophyll special pair and subsequent electron acceptors. PSI consists of a core antenna complex that captures photons, and an electron transfer chain that converts photonic excitation into a charge separation. The eukaryotic PSI reaction center is composed of at least 11 subunits. The cofactor is P700 is a chlorophyll a/chlorophyll a' dimer, A0 is one or more chlorophyll a, A1 is one or both phylloquinones and FX is a shared 4Fe-4S iron-sulfur center..

The protein resides in the plastid. Its subcellular location is the chloroplast thylakoid membrane. It carries out the reaction reduced [plastocyanin] + hnu + oxidized [2Fe-2S]-[ferredoxin] = oxidized [plastocyanin] + reduced [2Fe-2S]-[ferredoxin]. Functionally, psaA and PsaB bind P700, the primary electron donor of photosystem I (PSI), as well as the electron acceptors A0, A1 and FX. PSI is a plastocyanin-ferredoxin oxidoreductase, converting photonic excitation into a charge separation, which transfers an electron from the donor P700 chlorophyll pair to the spectroscopically characterized acceptors A0, A1, FX, FA and FB in turn. Oxidized P700 is reduced on the lumenal side of the thylakoid membrane by plastocyanin. This chain is Photosystem I P700 chlorophyll a apoprotein A2, found in Mesostigma viride (Green alga).